A 92-amino-acid polypeptide reads, in one-letter code: Small ribosomal subunit protein uS19c (92 aa).

Belongs to the universal ribosomal protein uS19 family.

Its subcellular location is the plastid. It localises to the chloroplast. Functionally, protein S19 forms a complex with S13 that binds strongly to the 16S ribosomal RNA. In Physcomitrium patens (Spreading-leaved earth moss), this protein is Small ribosomal subunit protein uS19c.